Reading from the N-terminus, the 95-residue chain is Aspartyl/glutamyl-tRNA(Asn/Gln) amidotransferase subunit C (95 aa).

This sequence belongs to the GatC family. In terms of assembly, heterotrimer of A, B and C subunits.

The enzyme catalyses L-glutamyl-tRNA(Gln) + L-glutamine + ATP + H2O = L-glutaminyl-tRNA(Gln) + L-glutamate + ADP + phosphate + H(+). The catalysed reaction is L-aspartyl-tRNA(Asn) + L-glutamine + ATP + H2O = L-asparaginyl-tRNA(Asn) + L-glutamate + ADP + phosphate + 2 H(+). Its function is as follows. Allows the formation of correctly charged Asn-tRNA(Asn) or Gln-tRNA(Gln) through the transamidation of misacylated Asp-tRNA(Asn) or Glu-tRNA(Gln) in organisms which lack either or both of asparaginyl-tRNA or glutaminyl-tRNA synthetases. The reaction takes place in the presence of glutamine and ATP through an activated phospho-Asp-tRNA(Asn) or phospho-Glu-tRNA(Gln). The sequence is that of Aspartyl/glutamyl-tRNA(Asn/Gln) amidotransferase subunit C from Acidiphilium cryptum (strain JF-5).